The sequence spans 311 residues: E3 ubiquitin-protein ligase RNF126 (311 aa).

Residues cysteine 13, cysteine 16, cysteine 29, and cysteine 32 each coordinate Zn(2+). The C4-type zinc finger occupies 13 to 32 (CHSCTAEIIPRLPEYTCPRC). 2 disordered regions span residues 42–62 (ETRNSENNSSNNSGTDQNRPS) and 95–133 (GTSGPVEEPRDGESRREHQSRQRYGARQPRARLSTRRAA). Positions 101–114 (EEPRDGESRREHQS) are enriched in basic and acidic residues. Residues 123-133 (PRARLSTRRAA) show a composition bias toward basic residues. The segment at 227-268 (CPVCKEDYTVGESVRQLPCNHLFHNDCIIPWLEQHDTCPVCR) adopts an RING-type zinc-finger fold. The disordered stretch occupies residues 274-311 (QNTATNPPGLTEMTFSSSSTSSSSSTSPTDENNAANNS). Low complexity predominate over residues 289–300 (SSSSTSSSSSTS). Residues 301-311 (PTDENNAANNS) are compositionally biased toward polar residues.

It localises to the cytoplasm. Its subcellular location is the nucleus. The catalysed reaction is S-ubiquitinyl-[E2 ubiquitin-conjugating enzyme]-L-cysteine + [acceptor protein]-L-lysine = [E2 ubiquitin-conjugating enzyme]-L-cysteine + N(6)-ubiquitinyl-[acceptor protein]-L-lysine.. It functions in the pathway protein modification; protein ubiquitination. Functionally, E3 ubiquitin-protein ligase that mediates ubiquitination oF target proteins. Depending on the associated E2 ligase, mediates 'Lys-27'-, 'Lys-29'-, 'Lys-48'- and/or 'Lys-63'-linked polyubiquitination of substrates. Part of a BAG6-dependent quality control process ensuring that proteins of the secretory pathway that are mislocalized to the cytosol are degraded by the proteasome. Probably acts by providing the ubiquitin ligase activity associated with the BAG6 complex and be responsible for ubiquitination of the hydrophobic mislocalized proteins and their targeting to the proteasome. The protein is E3 ubiquitin-protein ligase RNF126 of Xenopus tropicalis (Western clawed frog).